Reading from the N-terminus, the 220-residue chain is Aspartic protease inhibitor 8 (220 aa).

A signal peptide spans 1-23 (MMKCLFLLCLCLLPIVVFSSTFT). Residues 24-32 (SQNLIDLPS) constitute a propeptide that is removed on maturation. Intrachain disulfides connect Cys-80-Cys-125 and Cys-174-Cys-185.

Belongs to the protease inhibitor I3 (leguminous Kunitz-type inhibitor) family.

The protein resides in the vacuole. In terms of biological role, inhibitor of cathepsin D (aspartic protease) and trypsin (serine protease). May protect the plant by inhibiting proteases of invading organisms. This is Aspartic protease inhibitor 8 from Solanum tuberosum (Potato).